Reading from the N-terminus, the 392-residue chain is Formate-dependent phosphoribosylglycinamide formyltransferase (392 aa).

N(1)-(5-phospho-beta-D-ribosyl)glycinamide is bound by residues 22–23 (EL) and E82. ATP contacts are provided by residues R114, K155, 160-165 (SSGKGQ), 195-198 (EGVV), and E203. The region spanning 119-308 (RLAAEELGLP…EFALHVRAFL (190 aa)) is the ATP-grasp domain. Residues E267 and E279 each coordinate Mg(2+). N(1)-(5-phospho-beta-D-ribosyl)glycinamide-binding positions include D286, K355, and 362 to 363 (RR).

The protein belongs to the PurK/PurT family. As to quaternary structure, homodimer.

It carries out the reaction N(1)-(5-phospho-beta-D-ribosyl)glycinamide + formate + ATP = N(2)-formyl-N(1)-(5-phospho-beta-D-ribosyl)glycinamide + ADP + phosphate + H(+). The protein operates within purine metabolism; IMP biosynthesis via de novo pathway; N(2)-formyl-N(1)-(5-phospho-D-ribosyl)glycinamide from N(1)-(5-phospho-D-ribosyl)glycinamide (formate route): step 1/1. Involved in the de novo purine biosynthesis. Catalyzes the transfer of formate to 5-phospho-ribosyl-glycinamide (GAR), producing 5-phospho-ribosyl-N-formylglycinamide (FGAR). Formate is provided by PurU via hydrolysis of 10-formyl-tetrahydrofolate. The chain is Formate-dependent phosphoribosylglycinamide formyltransferase from Salmonella paratyphi B (strain ATCC BAA-1250 / SPB7).